The primary structure comprises 354 residues: Polyribonucleotide 5'-hydroxyl-kinase PYRAB01840 (354 aa).

36-43 (GDVDTGKT) is an ATP binding site.

A divalent metal cation serves as cofactor.

The enzyme catalyses a 5'-end dephospho-2'-deoxyribonucleoside-DNA + ATP = a 5'-end 5'-phospho-2'-deoxyribonucleoside-DNA + ADP + H(+). The catalysed reaction is a 5'-end dephospho-ribonucleoside-RNA + ATP = a 5'-end 5'-phospho-ribonucleoside-RNA + ADP + H(+). In terms of biological role, polynucleotide kinase that can phosphorylate the 5'-hydroxyl groups of both single-stranded RNA (ssRNA) and single-stranded DNA (ssDNA). Exhibits a strong preference for ssRNA. The protein is Polyribonucleotide 5'-hydroxyl-kinase PYRAB01840 of Pyrococcus abyssi (strain GE5 / Orsay).